We begin with the raw amino-acid sequence, 299 residues long: Porphobilinogen deaminase (299 aa).

An S-(dipyrrolylmethanemethyl)cysteine modification is found at Cys242.

This sequence belongs to the HMBS family. As to quaternary structure, monomer. It depends on dipyrromethane as a cofactor.

It catalyses the reaction 4 porphobilinogen + H2O = hydroxymethylbilane + 4 NH4(+). Its pathway is porphyrin-containing compound metabolism; protoporphyrin-IX biosynthesis; coproporphyrinogen-III from 5-aminolevulinate: step 2/4. In terms of biological role, tetrapolymerization of the monopyrrole PBG into the hydroxymethylbilane pre-uroporphyrinogen in several discrete steps. In Rickettsia prowazekii (strain Madrid E), this protein is Porphobilinogen deaminase (hemC).